A 219-amino-acid polypeptide reads, in one-letter code: MGQKINPLGLRLGTNQDHYSIWFSQPKAYSKSLQEDQKIRSFIRKYIQNMKISPSGVEGLARISIYKRIDLIELRIFLGFPKLLLENRPQGLEKLQITLQKELNCGNRRLNIVITKVEKPYSNPNILAEFIAGQLKNRVSVRQAMKKAIELAEEADTKGIQVQVAGRLNGQDIARVQWIREGRVPRQTIRATFDYCSYPVRTIYGILGIKIWIFVGEAK.

The 80-residue stretch at 39-118 (IRSFIRKYIQ…RLNIVITKVE (80 aa)) folds into the KH type-2 domain.

This sequence belongs to the universal ribosomal protein uS3 family. In terms of assembly, part of the 30S ribosomal subunit.

The protein resides in the plastid. This Cuscuta obtusiflora (Peruvian dodder) protein is Small ribosomal subunit protein uS3c (rps3).